Consider the following 197-residue polypeptide: Recombination protein RecR (197 aa).

The segment at 56 to 71 (CSRCFNLSAEDPCDIC) adopts a C4-type zinc-finger fold. The 96-residue stretch at 79 to 174 (ETICVVAEPR…RVTRIAFGLP (96 aa)) folds into the Toprim domain.

Belongs to the RecR family.

May play a role in DNA repair. It seems to be involved in an RecBC-independent recombinational process of DNA repair. It may act with RecF and RecO. The polypeptide is Recombination protein RecR (Gloeobacter violaceus (strain ATCC 29082 / PCC 7421)).